The primary structure comprises 157 residues: 3-dehydroquinate dehydratase (157 aa).

Tyr29 functions as the Proton acceptor in the catalytic mechanism. Asn80, His86, and Asp93 together coordinate substrate. The active-site Proton donor is His107. Substrate contacts are provided by residues 108 to 109 (IS) and Arg118.

This sequence belongs to the type-II 3-dehydroquinase family. As to quaternary structure, homododecamer.

The enzyme catalyses 3-dehydroquinate = 3-dehydroshikimate + H2O. It functions in the pathway metabolic intermediate biosynthesis; chorismate biosynthesis; chorismate from D-erythrose 4-phosphate and phosphoenolpyruvate: step 3/7. Functionally, catalyzes a trans-dehydration via an enolate intermediate. In Streptomyces coelicolor (strain ATCC BAA-471 / A3(2) / M145), this protein is 3-dehydroquinate dehydratase (aroQ).